The following is a 261-amino-acid chain: Cytochrome c oxidase subunit 3 (261 aa).

At 1-15 (MTHQTHSYHMVNPSP) the chain is on the mitochondrial matrix side. Residues 16–34 (WPLTGALSALLMTSGLIMW) traverse the membrane as a helical segment. The Mitochondrial intermembrane portion of the chain corresponds to 35 to 40 (FHFNSM). The helical transmembrane segment at 41 to 66 (ILLTLGLSTNILTMYQWWRDIIREST) threads the bilayer. Residues 67–72 (FQGHHT) are Mitochondrial matrix-facing. A helical transmembrane segment spans residues 73 to 105 (PTVQKGLRYGMILFIVSEVLFFTGFFWAFYHSS). The Mitochondrial intermembrane segment spans residues 106–128 (LAPTPELGGCWPPTGIHPLNPLE). Residues 129 to 152 (VPLLNTSVLLASGVSITWAHHSLM) traverse the membrane as a helical segment. Residues 153 to 155 (EGN) lie on the Mitochondrial matrix side of the membrane. Residues 156-183 (RKHMLQALFITIALGLYFTLLQASEYYE) form a helical membrane-spanning segment. Topologically, residues 184–190 (APFTISD) are mitochondrial intermembrane. Residues 191 to 223 (GIYGSTFFVATGFHGLHVIIGSTFLIVCFLRQV) traverse the membrane as a helical segment. Residues 224-232 (KFHFTSNHH) lie on the Mitochondrial matrix side of the membrane. A helical transmembrane segment spans residues 233 to 256 (FGFERAAWYWHFVDVVWLFLYVSI). Residues 257-261 (YWWGS) lie on the Mitochondrial intermembrane side of the membrane.

It belongs to the cytochrome c oxidase subunit 3 family. As to quaternary structure, component of the cytochrome c oxidase (complex IV, CIV), a multisubunit enzyme composed of 14 subunits. The complex is composed of a catalytic core of 3 subunits MT-CO1, MT-CO2 and MT-CO3, encoded in the mitochondrial DNA, and 11 supernumerary subunits COX4I, COX5A, COX5B, COX6A, COX6B, COX6C, COX7A, COX7B, COX7C, COX8 and NDUFA4, which are encoded in the nuclear genome. The complex exists as a monomer or a dimer and forms supercomplexes (SCs) in the inner mitochondrial membrane with NADH-ubiquinone oxidoreductase (complex I, CI) and ubiquinol-cytochrome c oxidoreductase (cytochrome b-c1 complex, complex III, CIII), resulting in different assemblies (supercomplex SCI(1)III(2)IV(1) and megacomplex MCI(2)III(2)IV(2)).

It localises to the mitochondrion inner membrane. The enzyme catalyses 4 Fe(II)-[cytochrome c] + O2 + 8 H(+)(in) = 4 Fe(III)-[cytochrome c] + 2 H2O + 4 H(+)(out). Component of the cytochrome c oxidase, the last enzyme in the mitochondrial electron transport chain which drives oxidative phosphorylation. The respiratory chain contains 3 multisubunit complexes succinate dehydrogenase (complex II, CII), ubiquinol-cytochrome c oxidoreductase (cytochrome b-c1 complex, complex III, CIII) and cytochrome c oxidase (complex IV, CIV), that cooperate to transfer electrons derived from NADH and succinate to molecular oxygen, creating an electrochemical gradient over the inner membrane that drives transmembrane transport and the ATP synthase. Cytochrome c oxidase is the component of the respiratory chain that catalyzes the reduction of oxygen to water. Electrons originating from reduced cytochrome c in the intermembrane space (IMS) are transferred via the dinuclear copper A center (CU(A)) of subunit 2 and heme A of subunit 1 to the active site in subunit 1, a binuclear center (BNC) formed by heme A3 and copper B (CU(B)). The BNC reduces molecular oxygen to 2 water molecules using 4 electrons from cytochrome c in the IMS and 4 protons from the mitochondrial matrix. This Balaenoptera musculus (Blue whale) protein is Cytochrome c oxidase subunit 3 (MT-CO3).